We begin with the raw amino-acid sequence, 153 residues long: ORM1-like protein 1 (153 aa).

The Cytoplasmic segment spans residues 1–26; it reads MNVGVAHSEVNPNTRVMNSRGMWLTY. Transmembrane regions (helical) follow at residues 27 to 46 and 47 to 64; these read ALGVGLLHIVLLSIPFFSVP and VAWTLTNVIHNLGMYVFL. Residues 65–100 lie on the Cytoplasmic side of the membrane; sequence HAVKGTPFETPDQGKARLLTHWEQLDYGVQFTSSRK. The chain crosses the membrane as a helical span at residues 101-121; the sequence is FFTISPIILYFLASFYTKYDT. Over 122-123 the chain is Extracellular; it reads TH. Residues 124–140 form a helical membrane-spanning segment; that stretch reads FILNTASLLSVLIPKMP. Residues 141 to 153 lie on the Cytoplasmic side of the membrane; the sequence is QLHGVRIFGINKY.

This sequence belongs to the ORM family. Ceramide-sensitive subunit of the serine palmitoyltransferase (SPT) complex, which is also composed of SPTLC1, SPTLC2/3 and SPTSSA/B.

The protein localises to the endoplasmic reticulum membrane. In terms of biological role, plays an essential role in the homeostatic regulation of sphingolipid de novo biosynthesis by modulating the activity of the serine palmitoyltransferase (SPT) in response to ceramide levels. When complexed to SPT, the binding of ceramides to its N-terminus stabilizes a conformation that block SPT substrate entry, hence preventing SPT catalytic activity. Through this mechanism, maintains ceramide levels at sufficient concentrations for the production of complex sphingolipids, but which prevents the accumulation of ceramides to levels that trigger apoptosis. The chain is ORM1-like protein 1 (ORMDL1) from Bos taurus (Bovine).